The primary structure comprises 127 residues: UPF0166 protein PYRAB06660 (127 aa).

It belongs to the UPF0166 family.

The chain is UPF0166 protein PYRAB06660 from Pyrococcus abyssi (strain GE5 / Orsay).